The chain runs to 886 residues: Conserved oligomeric Golgi complex subunit 1 (886 aa).

Over residues 834-846 (SAERKSPIQEPVE) the composition is skewed to basic and acidic residues. Positions 834-886 (SAERKSPIQEPVEKTATTTPTRKSGGNGARKGDSSKSKSSAASFFGMSQEWFR) are disordered. Serine 839 carries the phosphoserine modification. Polar residues predominate over residues 848 to 857 (TATTTPTRKS).

Belongs to the COG1 family. Component of the conserved oligomeric Golgi complex which is composed of eight different subunits and is required for normal Golgi morphology and localization.

It localises to the golgi apparatus membrane. Required for normal Golgi function. In Drosophila melanogaster (Fruit fly), this protein is Conserved oligomeric Golgi complex subunit 1.